Reading from the N-terminus, the 1154-residue chain is Polyketide biosynthesis protein ThaF (1154 aa).

The segment at 330–714 (MHAFLFPGQG…TNGIAPAARV (385 aa)) is acyl transferase. The interval 627–689 (SAVAASAPPR…PAPAPAPAPA (63 aa)) is disordered. Residues 641 to 672 (ADAQPPAASPARAATAASTMPPASASASASAP) are compositionally biased toward low complexity. Residues 673 to 689 (APAPAPAPAPAPAPAPA) are compositionally biased toward pro residues.

This sequence in the N-terminal section; belongs to the FabD family.

The protein localises to the cytoplasm. It carries out the reaction holo-[ACP] + malonyl-CoA = malonyl-[ACP] + CoA. The protein operates within antibiotic biosynthesis. Its function is as follows. Involved in production of the polyketide antibiotic thailandamide. Probably has an acyl transferase activity and could also have a flavin mononucleotide-dependent oxidoreductase activity. This chain is Polyketide biosynthesis protein ThaF, found in Burkholderia thailandensis (strain ATCC 700388 / DSM 13276 / CCUG 48851 / CIP 106301 / E264).